Here is a 569-residue protein sequence, read N- to C-terminus: MTLSDKEIIVKDLTFRYKEQKDRNAIEGINLEVEKGEFIVIMGPSGAGKSTLAQCLNGLIPHFTKGHYSGEVVVRGIKVKETPVSKMAKEIGLVFQDFEAQLFSTNTKLEIAFGPENFGVPREEIEEIIRRVLKIVNLEGLEDRPPSTLSGGQKQRLAIGSVLACMPSILCMDEPTTDLDPIGKIGVFNIARELHEEKELTLIIIEHETEEALNADRIILMEKGKIIKDGKPREVLKEVDLMEKIGLMPLQIPKYFSQVSNLEKADLPLTYEEGVQKFKELGLQIDEGKYQEILRREDEREKSYGDVIIQAKDVEYVYSNGTKALDGINLEIREGEFIALLGHNGSGKTTLAKHFNCLLKPTRGSVIVYGKDTKNSNVYEIGNYVGYAFQNPDHQIFADTVYDEIAFGPRMRGCTEEEVKERVAEALKAVDMEGFEKEDPFALSKGERQRIAVASILAARPKVIILDEPTTGLDYKEQKRMMELVKRLNESGHTIIMITHTMWIVAEYAHKVAVMRDGKIEMYGKVRDVFKEEERLLELSLKPPSIVSLSNRLGKTFLSVEEMVSCTKR.

ABC transporter domains lie at 8–248 and 309–542; these read IIVK…IGLM and IQAK…LSLK. ATP is bound by residues 43–50 and 342–349; these read GPSGAGKS and GHNGSGKT.

It belongs to the ABC transporter superfamily.

It localises to the cell membrane. In terms of biological role, probably part of an ABC transporter complex. Responsible for energy coupling to the transport system. This Caldanaerobacter subterraneus subsp. tengcongensis (strain DSM 15242 / JCM 11007 / NBRC 100824 / MB4) (Thermoanaerobacter tengcongensis) protein is Putative ABC transporter ATP-binding protein TTE1589.